A 200-amino-acid chain; its full sequence is COMM domain-containing protein 7 (200 aa).

A COMM domain is found at Gln133–Cys200.

This sequence belongs to the COMM domain-containing protein 7 family. In terms of assembly, component of the commander complex consisting of the CCC subcomplex and the retriever subcomplex. Component of the CCC (COMMD/CCDC22/CCDC93) subcomplex consisting of COMMD1, COMMD2, COMMD3, COMMD4, COMMD5, COMMD6, COMMD7, COMMD8, COMMD9, COMMD10, CCDC22 and CCDC93; within the complex forms a heterodimer with COMMD9. Interacts with RELA. Interacts with CCDC22, CCDC93, SCNN1B, CUL7. As to expression, widely expressed with highest expression in lung.

It localises to the cytoplasmic vesicle. In terms of biological role, scaffold protein in the commander complex that is essential for endosomal recycling of transmembrane cargos; the commander complex is composed of the CCC subcomplex and the retriever subcomplex. May modulate activity of cullin-RING E3 ubiquitin ligase (CRL) complexes. Associates with the NF-kappa-B complex and suppresses its transcriptional activity. The sequence is that of COMM domain-containing protein 7 (COMMD7) from Homo sapiens (Human).